The following is a 345-amino-acid chain: tRNA pseudouridine synthase B (345 aa).

The active-site Nucleophile is the D39.

Belongs to the pseudouridine synthase TruB family. Type 1 subfamily.

It catalyses the reaction uridine(55) in tRNA = pseudouridine(55) in tRNA. Functionally, responsible for synthesis of pseudouridine from uracil-55 in the psi GC loop of transfer RNAs. This is tRNA pseudouridine synthase B from Rickettsia rickettsii (strain Iowa).